The chain runs to 83 residues: MVTMAIKNFHIQDDRLKNGRGNKTMSESDYNTSDSGGWVLVRKKRDRSTRPPDVVDRWSNSTSTFPMGLDQIKIKRNGCVNTY.

Positions 15–36 (RLKNGRGNKTMSESDYNTSDSG) are disordered. The span at 21–35 (GNKTMSESDYNTSDS) shows a compositional bias: polar residues.

This is an uncharacterized protein from Aedes vexans (Inland floodwater mosquito).